The primary structure comprises 396 residues: Elongation factor Tu (396 aa).

Residues lysine 10–glutamate 206 enclose the tr-type G domain. Positions glycine 19–threonine 26 are G1. Glycine 19–threonine 26 serves as a coordination point for GTP. Residue threonine 26 participates in Mg(2+) binding. The segment at glycine 60 to serine 64 is G2. Residues aspartate 81 to glycine 84 form a G3 region. GTP is bound by residues aspartate 81–histidine 85 and asparagine 136–aspartate 139. The segment at asparagine 136–aspartate 139 is G4. Residues serine 174–leucine 176 are G5.

Belongs to the TRAFAC class translation factor GTPase superfamily. Classic translation factor GTPase family. EF-Tu/EF-1A subfamily. In terms of assembly, monomer.

The protein localises to the cytoplasm. It carries out the reaction GTP + H2O = GDP + phosphate + H(+). Its function is as follows. GTP hydrolase that promotes the GTP-dependent binding of aminoacyl-tRNA to the A-site of ribosomes during protein biosynthesis. The polypeptide is Elongation factor Tu (Parvibaculum lavamentivorans (strain DS-1 / DSM 13023 / NCIMB 13966)).